We begin with the raw amino-acid sequence, 329 residues long: Delta-aminolevulinic acid dehydratase (329 aa).

K202 (schiff-base intermediate with substrate) is an active-site residue. Residues R212 and R223 each coordinate 5-aminolevulinate. E239 is a binding site for Mg(2+). Catalysis depends on K254, which acts as the Schiff-base intermediate with substrate. The 5-aminolevulinate site is built by S280 and Y319.

Belongs to the ALAD family. Homooctamer.

The catalysed reaction is 2 5-aminolevulinate = porphobilinogen + 2 H2O + H(+). Its pathway is porphyrin-containing compound metabolism; protoporphyrin-IX biosynthesis; coproporphyrinogen-III from 5-aminolevulinate: step 1/4. Its function is as follows. Catalyzes an early step in the biosynthesis of tetrapyrroles. Binds two molecules of 5-aminolevulinate per subunit, each at a distinct site, and catalyzes their condensation to form porphobilinogen. The polypeptide is Delta-aminolevulinic acid dehydratase (hemB) (Mycobacterium leprae (strain TN)).